Consider the following 493-residue polypeptide: MSLLKMEYNLYAELKKITCGQSLSLFNEDGDFVEVEPGSLFKFLIPKGFYSSPSVKTSLVFETLTTTDNKITSINPTNAPKLYPLQHKVVSEVVSNMRKMIKLKRPLYITLHLACGFGKTITTCYLMATHGRKTVICVPNKMLIHQWKTQVEAVGLEHKISIDGVSSLLKELKTQSPDVLIVVSRHLTNDAFCKYINKHYDLFILDESHTYNLMNNTAVTRFLAYYPPMMCYFLTATPRPSNRIYCNSIINIAKLSDLKKTIYAVDSFFEPYSTDNIRHMIKRLDGPSNKYHIYTEKLLSVDEPRNQLILNTLVEEFKSGTINRVLVITKLREHMVLFYKRLLDLFGPEVVFIGDAQNRRTPDMVKSIKELNRFIFVSTLFYSGTGLDIPSLDSLFICSAVINNMQIEQLLGRVCRETELLDRTVYVFPNTSVKEIKYMIGNFVQRIISLSVDKLGFKQESYRKHQESDPTSVCTASSREERVLNRIFNSQNR.

The Helicase ATP-binding domain maps to 100–256 (MIKLKRPLYI…NSIINIAKLS (157 aa)). Position 113 to 120 (113 to 120 (LACGFGKT)) interacts with ATP. A DESH box motif is present at residues 206-209 (DESH).

The protein belongs to the helicase family. Poxviruses subfamily. In terms of assembly, interacts with OPG087. Might be part of a transcription complex composed at least of OPG087, OPG110, and OPG145.

Its subcellular location is the virion. Its function is as follows. DNA helicase which seems to act as a postreplicative transcription termination factor. Involved in ATP-dependent release of nascent RNA. Forms a stable complex with single-stranded DNA, and to a lesser extent RNA. The chain is Transcript termination protein OPG145 (OPG145) from Variola virus (isolate Human/India/Ind3/1967) (VARV).